Here is a 130-residue protein sequence, read N- to C-terminus: MREQLKLFTREIVDFTFLILSGFDYYQTLLISSNSSKKRPKDSSLLSEKKKKKKKKKKDVLSYLSYLKDLPFVPFLFWQPGYSQREKNPRQHSLFIMTITKPGMISMADMNYVVSKNRSLNRPAERGGNR.

At 1–58 the chain is on the cytoplasmic side; that stretch reads MREQLKLFTREIVDFTFLILSGFDYYQTLLISSNSSKKRPKDSSLLSEKKKKKKKKKK. The interval 34 to 57 is disordered; sequence NSSKKRPKDSSLLSEKKKKKKKKK. The chain crosses the membrane as a helical span at residues 59 to 79; that stretch reads DVLSYLSYLKDLPFVPFLFWQ. The Extracellular portion of the chain corresponds to 80 to 94; that stretch reads PGYSQREKNPRQHSL. The helical transmembrane segment at 95 to 115 threads the bilayer; that stretch reads FIMTITKPGMISMADMNYVVS. Residues 116–130 lie on the Cytoplasmic side of the membrane; the sequence is KNRSLNRPAERGGNR.

The protein resides in the membrane. This is an uncharacterized protein from Saccharomyces cerevisiae (strain ATCC 204508 / S288c) (Baker's yeast).